The sequence spans 227 residues: Enolase-phosphatase E1 (227 aa).

Mg(2+) contacts are provided by Asp11 and Glu13. Substrate-binding positions include 118-119 (SS) and Lys161. Asp186 contributes to the Mg(2+) binding site.

It belongs to the HAD-like hydrolase superfamily. MasA/MtnC family. As to quaternary structure, monomer. Mg(2+) is required as a cofactor.

It localises to the cytoplasm. It is found in the nucleus. It catalyses the reaction 5-methylsulfanyl-2,3-dioxopentyl phosphate + H2O = 1,2-dihydroxy-5-(methylsulfanyl)pent-1-en-3-one + phosphate. It functions in the pathway amino-acid biosynthesis; L-methionine biosynthesis via salvage pathway; L-methionine from S-methyl-5-thio-alpha-D-ribose 1-phosphate: step 3/6. Its pathway is amino-acid biosynthesis; L-methionine biosynthesis via salvage pathway; L-methionine from S-methyl-5-thio-alpha-D-ribose 1-phosphate: step 4/6. Its function is as follows. Bifunctional enzyme that catalyzes the enolization of 2,3-diketo-5-methylthiopentyl-1-phosphate (DK-MTP-1-P) into the intermediate 2-hydroxy-3-keto-5-methylthiopentenyl-1-phosphate (HK-MTPenyl-1-P), which is then dephosphorylated to form the acireductone 1,2-dihydroxy-3-keto-5-methylthiopentene (DHK-MTPene). The sequence is that of Enolase-phosphatase E1 from Saccharomyces cerevisiae (strain JAY291) (Baker's yeast).